The following is a 629-amino-acid chain: Arginine--tRNA ligase (629 aa).

A 'HIGH' region motif is present at residues 128–138; sequence VNPTKPLHMGH.

The protein belongs to the class-I aminoacyl-tRNA synthetase family.

It is found in the cytoplasm. The enzyme catalyses tRNA(Arg) + L-arginine + ATP = L-arginyl-tRNA(Arg) + AMP + diphosphate. The sequence is that of Arginine--tRNA ligase (argS) from Pyrococcus horikoshii (strain ATCC 700860 / DSM 12428 / JCM 9974 / NBRC 100139 / OT-3).